The primary structure comprises 205 residues: uncharacterized protein (205 aa).

A disordered region spans residues 1–42; that stretch reads MSRKRDKPYTNRHTPARISKRRRPWAPSSSEHDEIIDKPITK. Residues 14–24 show a composition bias toward basic residues; sequence TPARISKRRRP. Basic and acidic residues predominate over residues 30-40; the sequence is SEHDEIIDKPI. In terms of domain architecture, RRM spans 47-122; it reads PALVVMGLPA…KKLEVVWATD (76 aa). The interval 170–191 is disordered; it reads PRSDNTKGISGDGGISSPATTS.

This is an uncharacterized protein from Arabidopsis thaliana (Mouse-ear cress).